A 403-amino-acid chain; its full sequence is tRNA(Met) cytidine acetate ligase (403 aa).

ATP-binding positions include 7–20 (VVEY…HAYH), Gly101, Asn164, and 189–190 (RI).

It belongs to the TmcAL family.

Its subcellular location is the cytoplasm. It catalyses the reaction cytidine(34) in elongator tRNA(Met) + acetate + ATP = N(4)-acetylcytidine(34) in elongator tRNA(Met) + AMP + diphosphate. Its function is as follows. Catalyzes the formation of N(4)-acetylcytidine (ac(4)C) at the wobble position of elongator tRNA(Met), using acetate and ATP as substrates. First activates an acetate ion to form acetyladenylate (Ac-AMP) and then transfers the acetyl group to tRNA to form ac(4)C34. This chain is tRNA(Met) cytidine acetate ligase, found in Lysinibacillus sphaericus (strain C3-41).